We begin with the raw amino-acid sequence, 310 residues long: Zinc-finger homeodomain protein 3 (310 aa).

The disordered stretch occupies residues 1–64 (MEIASQEDPI…GLGKNHDHSH (64 aa)). The segment covering 39–56 (LNITTSNPLLVSSNSNGL) has biased composition (polar residues). Residues 87–136 (YKECLKNHAATMGGNAIDGCGEFMPSGEEGSIEALTCSVCNCHRNFHRRE) form a ZF-HD dimerization-type; degenerate zinc finger. Disordered regions lie at residues 184–220 (TAGSNSESEDLMEEEGGGSLTFRQPPPPPSPYSYGHN) and 281–310 (LSKKSNNVSNNVDLSAGNNDITENLASTNP). Acidic residues predominate over residues 190 to 199 (ESEDLMEEEG). Positions 222–285 (KKRFRTKFTQ…NNKQNLSKKS (64 aa)) form a DNA-binding region, homeobox. Residues 281–291 (LSKKSNNVSNN) are compositionally biased toward low complexity. The segment covering 292–310 (VDLSAGNNDITENLASTNP) has biased composition (polar residues).

In terms of assembly, homo- and heterodimer with other ZFHD proteins. Interacts with MIF2 and MIF3; these interactions prevent nuclear localization and DNA-binding to inhibit transcription regulation activity. Binds to ZHD1, ZHD2 and ZHD11. Interacts with HIPP30. Interacts with KIN10, KIN11 and FLZ8. Mostly expressed in flowers and inflorescence.

The protein localises to the nucleus. Its function is as follows. Putative transcription factor. This is Zinc-finger homeodomain protein 3 (ZHD3) from Arabidopsis thaliana (Mouse-ear cress).